A 175-amino-acid polypeptide reads, in one-letter code: Adenine phosphoribosyltransferase (175 aa).

The protein belongs to the purine/pyrimidine phosphoribosyltransferase family. Homodimer.

The protein localises to the cytoplasm. It carries out the reaction AMP + diphosphate = 5-phospho-alpha-D-ribose 1-diphosphate + adenine. The protein operates within purine metabolism; AMP biosynthesis via salvage pathway; AMP from adenine: step 1/1. Catalyzes a salvage reaction resulting in the formation of AMP, that is energically less costly than de novo synthesis. This Nitrosospira multiformis (strain ATCC 25196 / NCIMB 11849 / C 71) protein is Adenine phosphoribosyltransferase.